Reading from the N-terminus, the 186-residue chain is Crossover junction endodeoxyribonuclease RuvC (186 aa).

Residues Asp7, Glu67, and Asp140 contribute to the active site. Mg(2+)-binding residues include Asp7, Glu67, and Asp140.

Belongs to the RuvC family. Homodimer which binds Holliday junction (HJ) DNA. The HJ becomes 2-fold symmetrical on binding to RuvC with unstacked arms; it has a different conformation from HJ DNA in complex with RuvA. In the full resolvosome a probable DNA-RuvA(4)-RuvB(12)-RuvC(2) complex forms which resolves the HJ. Mg(2+) serves as cofactor.

Its subcellular location is the cytoplasm. It carries out the reaction Endonucleolytic cleavage at a junction such as a reciprocal single-stranded crossover between two homologous DNA duplexes (Holliday junction).. In terms of biological role, the RuvA-RuvB-RuvC complex processes Holliday junction (HJ) DNA during genetic recombination and DNA repair. Endonuclease that resolves HJ intermediates. Cleaves cruciform DNA by making single-stranded nicks across the HJ at symmetrical positions within the homologous arms, yielding a 5'-phosphate and a 3'-hydroxyl group; requires a central core of homology in the junction. The consensus cleavage sequence is 5'-(A/T)TT(C/G)-3'. Cleavage occurs on the 3'-side of the TT dinucleotide at the point of strand exchange. HJ branch migration catalyzed by RuvA-RuvB allows RuvC to scan DNA until it finds its consensus sequence, where it cleaves and resolves the cruciform DNA. In Chloroherpeton thalassium (strain ATCC 35110 / GB-78), this protein is Crossover junction endodeoxyribonuclease RuvC.